The sequence spans 860 residues: Leucine--tRNA ligase (860 aa).

The 'HIGH' region motif lies at 42 to 52 (PYPSGRLHMGH). A 'KMSKS' region motif is present at residues 619 to 623 (KMSKS). ATP is bound at residue Lys-622.

The protein belongs to the class-I aminoacyl-tRNA synthetase family.

It is found in the cytoplasm. It catalyses the reaction tRNA(Leu) + L-leucine + ATP = L-leucyl-tRNA(Leu) + AMP + diphosphate. This chain is Leucine--tRNA ligase, found in Histophilus somni (strain 2336) (Haemophilus somnus).